We begin with the raw amino-acid sequence, 144 residues long: MKTLLLLAVIMAIGLLQVHGDLLNFRKMIKLTTGKEPATRYSFYGCYCGMSGRGTPKDATDWCCRAHDCCYKNLESRGCRTKFLKYNVTYQEDQIVCEDADDCKSQVCQCDKIAANCFAANLKTYNKKLRFYNKFRCRGAAPAC.

The first 20 residues, 1–20 (MKTLLLLAVIMAIGLLQVHG), serve as a signal peptide directing secretion. 7 disulfide bridges follow: Cys-46–Cys-137, Cys-48–Cys-64, Cys-63–Cys-117, Cys-69–Cys-144, Cys-70–Cys-110, Cys-79–Cys-103, and Cys-97–Cys-108. Ca(2+)-binding residues include Tyr-47, Gly-49, and Ser-51. His-67 is an active-site residue. Asp-68 contacts Ca(2+). Asp-111 is an active-site residue.

It belongs to the phospholipase A2 family. It depends on Ca(2+) as a cofactor.

The protein localises to the secreted. The protein resides in the cell membrane. It is found in the mitochondrion outer membrane. The catalysed reaction is a 1,2-diacyl-sn-glycero-3-phosphoethanolamine + H2O = a 1-acyl-sn-glycero-3-phosphoethanolamine + a fatty acid + H(+). It catalyses the reaction 1-hexadecanoyl-2-(9Z-octadecenoyl)-sn-glycero-3-phosphoethanolamine + H2O = 1-hexadecanoyl-sn-glycero-3-phosphoethanolamine + (9Z)-octadecenoate + H(+). The enzyme catalyses 1-hexadecanoyl-2-(9Z,12Z-octadecadienoyl)-sn-glycero-3-phosphoethanolamine + H2O = 1-hexadecanoyl-sn-glycero-3-phosphoethanolamine + (9Z,12Z)-octadecadienoate + H(+). It carries out the reaction 1-hexadecanoyl-2-(5Z,8Z,11Z,14Z-eicosatetraenoyl)-sn-glycero-3-phosphoethanolamine + H2O = 1-hexadecanoyl-sn-glycero-3-phosphoethanolamine + (5Z,8Z,11Z,14Z)-eicosatetraenoate + H(+). The catalysed reaction is N-hexadecanoyl-1,2-di-(9Z-octadecenoyl)-sn-glycero-3-phosphoethanolamine + H2O = N-hexadecanoyl-1-(9Z-octadecenoyl)-sn-glycero-3-phosphoethanolamine + (9Z)-octadecenoate + H(+). It catalyses the reaction 1,2-dihexadecanoyl-sn-glycero-3-phospho-(1'-sn-glycerol) + H2O = 1-hexadecanoyl-sn-glycero-3-phospho-(1'-sn-glycerol) + hexadecanoate + H(+). The enzyme catalyses 1-hexadecanoyl-2-(9Z-octadecenoyl)-sn-glycero-3-phosphoglycerol + H2O = 1-hexadecanoyl-sn-glycero-3-phosphoglycerol + (9Z)-octadecenoate + H(+). It carries out the reaction 1-hexadecanoyl-2-(9Z-octadecenoyl)-sn-glycero-3-phospho-(1'-sn-glycerol) + H2O = 1-hexadecanoyl-sn-glycero-3-phospho-(1'-sn-glycerol) + (9Z)-octadecenoate + H(+). The catalysed reaction is a 1,2-diacyl-sn-glycero-3-phosphocholine + H2O = a 1-acyl-sn-glycero-3-phosphocholine + a fatty acid + H(+). It catalyses the reaction 1,2-dihexadecanoyl-sn-glycero-3-phosphocholine + H2O = 1-hexadecanoyl-sn-glycero-3-phosphocholine + hexadecanoate + H(+). The enzyme catalyses 1-hexadecanoyl-2-(9Z-octadecenoyl)-sn-glycero-3-phosphocholine + H2O = 1-hexadecanoyl-sn-glycero-3-phosphocholine + (9Z)-octadecenoate + H(+). It carries out the reaction 1-hexadecanoyl-2-(9Z,12Z-octadecadienoyl)-sn-glycero-3-phosphocholine + H2O = (9Z,12Z)-octadecadienoate + 1-hexadecanoyl-sn-glycero-3-phosphocholine + H(+). The catalysed reaction is 1-hexadecanoyl-2-(4Z,7Z,10Z,13Z,16Z,19Z-docosahexaenoyl)-sn-glycero-3-phosphocholine + H2O = (4Z,7Z,10Z,13Z,16Z,19Z)-docosahexaenoate + 1-hexadecanoyl-sn-glycero-3-phosphocholine + H(+). Its function is as follows. Secretory calcium-dependent phospholipase A2 that primarily targets extracellular phospholipids with implications in host antimicrobial defense, inflammatory response and tissue regeneration. Hydrolyzes the ester bond of the fatty acyl group attached at sn-2 position of phospholipids (phospholipase A2 activity) with preference for phosphatidylethanolamines and phosphatidylglycerols over phosphatidylcholines. Contributes to lipid remodeling of cellular membranes and generation of lipid mediators involved in pathogen clearance. Displays bactericidal activity against Gram-positive bacteria by directly hydrolyzing phospholipids of the bacterial membrane. Upon sterile inflammation, targets membrane phospholipids of extracellular mitochondria released from activated platelets, generating free unsaturated fatty acids such as arachidonate that is used by neighboring leukocytes to synthesize inflammatory eicosanoids such as leukotrienes. Simultaneously, by compromising mitochondrial membrane integrity, promotes the release in circulation of potent damage-associated molecular pattern molecules that activate the innate immune response. Plays a stem cell regulator role in the intestinal crypt. Within intracellular compartment mediates Paneth cell differentiation and its stem cell supporting functions by inhibiting Wnt signaling pathway in intestinal stem cell (ICS). Secreted in the intestinal lumen upon inflammation, acts in an autocrine way and promotes prostaglandin E2 synthesis that stimulates Wnt signaling pathway in ICS cells and tissue regeneration. May play a role in the biosynthesis of N-acyl ethanolamines that regulate energy metabolism and inflammation. Hydrolyzes N-acyl phosphatidylethanolamines to N-acyl lysophosphatidylethanolamines, which are further cleaved by a lysophospholipase D to release N-acyl ethanolamines. Independent of its catalytic activity, acts as a ligand for integrins. Binds to and activates integrins ITGAV:ITGB3, ITGA4:ITGB1 and ITGA5:ITGB1. Binds to a site (site 2) which is distinct from the classical ligand-binding site (site 1) and induces integrin conformational changes and enhanced ligand binding to site 1. Induces cell proliferation in an integrin-dependent manner. This Bos taurus (Bovine) protein is Phospholipase A2, membrane associated (PLA2G2A).